The following is a 476-amino-acid chain: Aspartyl/glutamyl-tRNA(Asn/Gln) amidotransferase subunit B (476 aa).

The protein belongs to the GatB/GatE family. GatB subfamily. In terms of assembly, heterotrimer of A, B and C subunits.

It catalyses the reaction L-glutamyl-tRNA(Gln) + L-glutamine + ATP + H2O = L-glutaminyl-tRNA(Gln) + L-glutamate + ADP + phosphate + H(+). It carries out the reaction L-aspartyl-tRNA(Asn) + L-glutamine + ATP + H2O = L-asparaginyl-tRNA(Asn) + L-glutamate + ADP + phosphate + 2 H(+). Its function is as follows. Allows the formation of correctly charged Asn-tRNA(Asn) or Gln-tRNA(Gln) through the transamidation of misacylated Asp-tRNA(Asn) or Glu-tRNA(Gln) in organisms which lack either or both of asparaginyl-tRNA or glutaminyl-tRNA synthetases. The reaction takes place in the presence of glutamine and ATP through an activated phospho-Asp-tRNA(Asn) or phospho-Glu-tRNA(Gln). This is Aspartyl/glutamyl-tRNA(Asn/Gln) amidotransferase subunit B from Clostridium botulinum (strain Langeland / NCTC 10281 / Type F).